We begin with the raw amino-acid sequence, 337 residues long: Centromere protein N (337 aa).

2 positions are modified to phosphoserine: S226 and S233.

It belongs to the CENP-N/CHL4 family. Component of the CENPA-NAC complex, at least composed of CENPA, CENPC, CENPH, CENPM, CENPN, CENPT and CENPU. The CENPA-NAC complex interacts with the CENPA-CAD complex, composed of CENPI, CENPK, CENPL, CENPO, CENPP, CENPQ, CENPR and CENPS. Interacts directly with CENPA. Identified in a centromere complex containing histones H2A, H2B and H4, and at least CENPA, CENPB, CENPC, CENPT, CENPN, HJURP, SUPT16H, SSRP1 and RSF1.

The protein localises to the nucleus. The protein resides in the chromosome. It is found in the centromere. Its subcellular location is the kinetochore. Functionally, component of the CENPA-NAC (nucleosome-associated) complex, a complex that plays a central role in assembly of kinetochore proteins, mitotic progression and chromosome segregation. The CENPA-NAC complex recruits the CENPA-CAD (nucleosome distal) complex and may be involved in incorporation of newly synthesized CENPA into centromeres. CENPN is the first protein to bind specifically to CENPA nucleosomes and the direct binding of CENPA nucleosomes by CENPN is required for centromere assembly. Required for chromosome congression and efficiently align the chromosomes on a metaphase plate. The polypeptide is Centromere protein N (Cenpn) (Mus musculus (Mouse)).